We begin with the raw amino-acid sequence, 464 residues long: Siroheme synthase (464 aa).

The segment at 1–203 (MEFLPLFHNL…GQGAEAERML (203 aa)) is precorrin-2 dehydrogenase /sirohydrochlorin ferrochelatase. Residues 22–23 (EI) and 43–44 (PE) each bind NAD(+). Residue Ser128 is modified to Phosphoserine. The tract at residues 216-464 (GEVYLVGAGP…AWFEGAQATL (249 aa)) is uroporphyrinogen-III C-methyltransferase. Pro225 contributes to the S-adenosyl-L-methionine binding site. Asp248 acts as the Proton acceptor in catalysis. Lys270 (proton donor) is an active-site residue. S-adenosyl-L-methionine-binding positions include 301–303 (GGD), Ile306, 331–332 (TA), Met383, and Gly412.

In the N-terminal section; belongs to the precorrin-2 dehydrogenase / sirohydrochlorin ferrochelatase family. It in the C-terminal section; belongs to the precorrin methyltransferase family.

It catalyses the reaction uroporphyrinogen III + 2 S-adenosyl-L-methionine = precorrin-2 + 2 S-adenosyl-L-homocysteine + H(+). It carries out the reaction precorrin-2 + NAD(+) = sirohydrochlorin + NADH + 2 H(+). The catalysed reaction is siroheme + 2 H(+) = sirohydrochlorin + Fe(2+). Its pathway is cofactor biosynthesis; adenosylcobalamin biosynthesis; precorrin-2 from uroporphyrinogen III: step 1/1. The protein operates within cofactor biosynthesis; adenosylcobalamin biosynthesis; sirohydrochlorin from precorrin-2: step 1/1. It functions in the pathway porphyrin-containing compound metabolism; siroheme biosynthesis; precorrin-2 from uroporphyrinogen III: step 1/1. It participates in porphyrin-containing compound metabolism; siroheme biosynthesis; siroheme from sirohydrochlorin: step 1/1. Its pathway is porphyrin-containing compound metabolism; siroheme biosynthesis; sirohydrochlorin from precorrin-2: step 1/1. Functionally, multifunctional enzyme that catalyzes the SAM-dependent methylations of uroporphyrinogen III at position C-2 and C-7 to form precorrin-2 via precorrin-1. Then it catalyzes the NAD-dependent ring dehydrogenation of precorrin-2 to yield sirohydrochlorin. Finally, it catalyzes the ferrochelation of sirohydrochlorin to yield siroheme. This chain is Siroheme synthase, found in Pseudomonas syringae pv. syringae (strain B728a).